The chain runs to 434 residues: Autophagy-related protein 18 (434 aa).

3 WD repeats span residues 1 to 34 (MNYV…KIFT), 183 to 223 (AHRA…KLYQ), and 228 to 267 (TYPS…TGLP). Positions 224–228 (FRRGT) match the L/FRRG motif motif. The disordered stretch occupies residues 262 to 318 (PVTGLPESPQSPGDKDKWRRSRSFDSENGSPPAGISPGSEMADVPAEKSKSSGTFGS). Positions 274–286 (GDKDKWRRSRSFD) are enriched in basic and acidic residues. The stretch at 367–407 (PRSGPVKSVVAMSSSSPQVMVVTSDGGFYIYSIDMETGGEG) is one WD 4 repeat.

Belongs to the WD repeat PROPPIN family. As to quaternary structure, component of the PI(3,5)P2 regulatory complex.

It localises to the preautophagosomal structure membrane. The protein localises to the vacuole membrane. It is found in the endosome membrane. The PI(3,5)P2 regulatory complex regulates both the synthesis and turnover of phosphatidylinositol 3,5-bisphosphate (PtdIns(3,5)P2). Necessary for proper vacuole morphology. Plays an important role in osmotically-induced vacuole fragmentation. Required for cytoplasm to vacuole transport (Cvt) vesicle formation, pexophagy and starvation-induced autophagy. Involved in correct atg9 trafficking to the pre-autophagosomal structure. Might also be involved in premeiotic DNA replication. In Botryotinia fuckeliana (strain B05.10) (Noble rot fungus), this protein is Autophagy-related protein 18 (atg18).